Consider the following 148-residue polypeptide: MLKALFICVASCLLVVNDGNIIHRCSLAKILYEEDLDGFEGYSLPDWLCLAFVESNFNISKVNENVDGSFDYGIFQINSRYWCNDYQSHSENFCHVDCQELLSPNLISTIHCAKKIVSGPGGMKNWVEWKLHCLGRPLSYWMTGCHLG.

The N-terminal stretch at 1 to 19 is a signal peptide; sequence MLKALFICVASCLLVVNDG. The C-type lysozyme domain occupies 20–148; sequence NIIHRCSLAK…SYWMTGCHLG (129 aa). Disulfide bonds link Cys-25-Cys-145, Cys-49-Cys-133, Cys-83-Cys-98, and Cys-94-Cys-112. Glu-54 is an active-site residue. Residue Asn-58 is glycosylated (N-linked (GlcNAc...) asparagine). Asp-71 is an active-site residue.

Belongs to the glycosyl hydrolase 22 family. In terms of assembly, monomer. As to expression, expressed strongly in testis and epididymis and weakly in seminal vesicle, vas deferens, kidney and spleen. Highly expressed in primary spermatocytes and round spermatids (at protein level).

The protein localises to the secreted. Its subcellular location is the cell surface. The protein resides in the cell projection. It localises to the cilium. It is found in the flagellum. The catalysed reaction is Hydrolysis of (1-&gt;4)-beta-linkages between N-acetylmuramic acid and N-acetyl-D-glucosamine residues in a peptidoglycan and between N-acetyl-D-glucosamine residues in chitodextrins.. Functionally, may be involved sperm-egg plasma membrane adhesion and fusion during fertilization. Exhibits bacteriolytic activity in vitro against Micrococcus luteus and Staphylococcus aureus. Shows weak bacteriolytic activity against Gram-positive bacteria at physiological pH. Bacteriolytic activity is pH-dependent, with a maximum at around pH 5.6. The protein is Lysozyme-like protein 6 (Lyzl6) of Mus musculus (Mouse).